The sequence spans 337 residues: Methylthioribose-1-phosphate isomerase (337 aa).

Substrate contacts are provided by residues 51 to 53 (RGA), arginine 88, and glutamine 187. Catalysis depends on aspartate 228, which acts as the Proton donor. 238 to 239 (NK) contacts substrate.

It belongs to the eIF-2B alpha/beta/delta subunits family. MtnA subfamily.

It catalyses the reaction 5-(methylsulfanyl)-alpha-D-ribose 1-phosphate = 5-(methylsulfanyl)-D-ribulose 1-phosphate. It functions in the pathway amino-acid biosynthesis; L-methionine biosynthesis via salvage pathway; L-methionine from S-methyl-5-thio-alpha-D-ribose 1-phosphate: step 1/6. Its function is as follows. Catalyzes the interconversion of methylthioribose-1-phosphate (MTR-1-P) into methylthioribulose-1-phosphate (MTRu-1-P). This chain is Methylthioribose-1-phosphate isomerase, found in Anaeromyxobacter sp. (strain Fw109-5).